A 144-amino-acid polypeptide reads, in one-letter code: Large ribosomal subunit protein uL11 (144 aa).

This sequence belongs to the universal ribosomal protein uL11 family. In terms of assembly, part of the ribosomal stalk of the 50S ribosomal subunit. Interacts with L10 and the large rRNA to form the base of the stalk. L10 forms an elongated spine to which L12 dimers bind in a sequential fashion forming a multimeric L10(L12)X complex. One or more lysine residues are methylated.

Forms part of the ribosomal stalk which helps the ribosome interact with GTP-bound translation factors. The polypeptide is Large ribosomal subunit protein uL11 (Rhodococcus opacus (strain B4)).